The chain runs to 242 residues: Segregation and condensation protein A (242 aa).

This sequence belongs to the ScpA family. Component of a cohesin-like complex composed of ScpA, ScpB and the Smc homodimer, in which ScpA and ScpB bind to the head domain of Smc. The presence of the three proteins is required for the association of the complex with DNA.

The protein localises to the cytoplasm. Its function is as follows. Participates in chromosomal partition during cell division. May act via the formation of a condensin-like complex containing Smc and ScpB that pull DNA away from mid-cell into both cell halves. The polypeptide is Segregation and condensation protein A (Streptococcus pneumoniae serotype 4 (strain ATCC BAA-334 / TIGR4)).